Reading from the N-terminus, the 708-residue chain is Exocyst complex component 5 (708 aa).

A2 is modified (N-acetylalanine). A coiled-coil region spans residues K40–E101. Phosphothreonine occurs at positions 122, 395, and 405. S412 carries the phosphoserine modification.

Belongs to the SEC10 family. In terms of assembly, the exocyst complex is composed of EXOC1, EXOC2, EXOC3, EXOC4, EXOC5, EXOC6, EXOC7 and EXOC8. Interacts with EXOC3L1. Ubiquitous.

It is found in the cytoplasm. The protein localises to the midbody. In terms of biological role, component of the exocyst complex involved in the docking of exocytic vesicles with fusion sites on the plasma membrane. In Rattus norvegicus (Rat), this protein is Exocyst complex component 5 (Exoc5).